Consider the following 494-residue polypeptide: Splicing regulatory glutamine/lysine-rich protein 1 (494 aa).

The 77-residue stretch at 69–145 folds into the RRM domain; the sequence is RTVYVGNLNS…RPLKINHSNN (77 aa). 2 positions are modified to phosphoserine: Ser174 and Ser187. The segment at 176 to 494 is disordered; it reads ISAAIEPESG…ERLCSTADAV (319 aa). The span at 183 to 192 shows a compositional bias: basic and acidic residues; it reads ESGKSNERKG. 2 stretches are compositionally biased toward basic residues: residues 193 to 230 and 238 to 262; these read GRSRSHTRSKSRSSSKSHSRRKRSQSKHRSRSHNRSRS and SKSPHKKRSKSRERRKSRSRSRSRD. The segment covering 263-340 has biased composition (basic and acidic residues); sequence KRKDTREKVK…DRSKEADEKR (78 aa). Thr348 carries the post-translational modification Phosphothreonine. Residues 357-373 show a composition bias toward basic residues; it reads RRSRSASRERRRRRSRS. 2 stretches are compositionally biased toward basic and acidic residues: residues 404-453 and 463-474; these read REKE…KEAD and KDTARTEEESKA.

The protein belongs to the splicing factor SR family. Interacts with SREK1IP1. Homodimer. Binds SFRS1, SFRS2, SFRS3 and SFRS6. Interacts with the spliceosome. In terms of tissue distribution, ubiquitous. Detected in liver, brain, lung, spleen, testis and pancreas.

The protein localises to the nucleus. Participates in the regulation of alternative splicing by modulating the activity of other splice facors. Inhibits the splicing activity of SFRS1, SFRS2 and SFRS6. Augments the splicing activity of SFRS3. In Rattus norvegicus (Rat), this protein is Splicing regulatory glutamine/lysine-rich protein 1 (Srek1).